Consider the following 1188-residue polypeptide: Phospholipid-transporting ATPase IB (1188 aa).

The Cytoplasmic portion of the chain corresponds to 1-94 (MLNGAGLDKA…PRFLYEQIRR (94 aa)). A Phosphothreonine modification is found at T45. A helical transmembrane segment spans residues 95 to 115 (AANAFFLFIALLQQIPDVSPT). Residues 116 to 119 (GRYT) are Extracellular-facing. The helical transmembrane segment at 120 to 140 (TLVPLIIILTIAGIKEIVEDF) threads the bilayer. Over 141 to 316 (KRHKADNAVN…SNVEKVTNVQ (176 aa)) the chain is Cytoplasmic. A helical membrane pass occupies residues 317–337 (ILVLFGILLVMALVSSAGALY). Residues 338 to 364 (WNRSHGEKNWYIKKMDTTSDNFGYNLL) lie on the Extracellular side of the membrane. Residues 365 to 385 (TFIILYNNLIPISLLVTLEVV) form a helical membrane-spanning segment. The Cytoplasmic portion of the chain corresponds to 386–887 (KYTQALFINW…CILYCFYKNV (502 aa)). D428 functions as the 4-aspartylphosphate intermediate in the catalytic mechanism. ATP-binding residues include D428, K429, T430, E528, F569, K592, R625, T705, G706, D707, R795, and K801. D428 provides a ligand contact to Mg(2+). T430 contacts Mg(2+). D821 provides a ligand contact to Mg(2+). The ATP site is built by N824 and D825. Position 825 (D825) interacts with Mg(2+). The helical transmembrane segment at 888–908 (VLYIIELWFAFVNGFSGQILF) threads the bilayer. The Extracellular portion of the chain corresponds to 909–910 (ER). A helical transmembrane segment spans residues 911–931 (WCIGLYNVIFTALPPFTLGIF). Residues 932–959 (ERSCTQESMLRFPQLYKITQNGEGFNTK) are Cytoplasmic-facing. Residues 960–980 (VFWGHCINALVHSLILFWFPM) traverse the membrane as a helical segment. The Extracellular segment spans residues 981 to 997 (KALEHDTVLTSGHATDY). The helical transmembrane segment at 998 to 1018 (LFVGNIVYTYVVVTVCLKAGL) threads the bilayer. Over 1019–1028 (ETTAWTKFSH) the chain is Cytoplasmic. Residues 1029 to 1049 (LAVWGSMLTWLVFFGIYSTIW) traverse the membrane as a helical segment. At 1050 to 1063 (PTIPIAPDMRGQAT) the chain is on the extracellular side. A helical transmembrane segment spans residues 1064-1084 (MVLSSAHFWLGLFLVPTACLI). The Cytoplasmic portion of the chain corresponds to 1085 to 1188 (EDVAWRAAKH…DTTKKKSRKK (104 aa)). The segment at 1162–1188 (SQEEHGAVSQEEVIRAYDTTKKKSRKK) is disordered. Positions 1163 to 1182 (QEEHGAVSQEEVIRAYDTTK) are enriched in basic and acidic residues.

It belongs to the cation transport ATPase (P-type) (TC 3.A.3) family. Type IV subfamily. As to quaternary structure, component of a P4-ATPase flippase complex which consists of a catalytic alpha subunit and an accessory beta subunit. Interacts with TMEM30A to form a flippase complex. Mg(2+) is required as a cofactor. Strongly expressed in the brain, cerebellum, retina and testis.

It localises to the membrane. Its subcellular location is the golgi apparatus membrane. It is found in the endosome membrane. The protein resides in the cell membrane. The protein localises to the photoreceptor outer segment membrane. It localises to the photoreceptor inner segment membrane. The catalysed reaction is ATP + H2O + phospholipidSide 1 = ADP + phosphate + phospholipidSide 2.. The enzyme catalyses a 1,2-diacyl-sn-glycero-3-phospho-L-serine(out) + ATP + H2O = a 1,2-diacyl-sn-glycero-3-phospho-L-serine(in) + ADP + phosphate + H(+). It catalyses the reaction a 1,2-diacyl-sn-glycero-3-phosphoethanolamine(in) + ATP + H2O = a 1,2-diacyl-sn-glycero-3-phosphoethanolamine(out) + ADP + phosphate + H(+). Functionally, catalytic component of a P4-ATPase flippase complex which catalyzes the hydrolysis of ATP coupled to the transport of aminophospholipids from the outer to the inner leaflet of various membranes and ensures the maintenance of asymmetric distribution of phospholipids. Able to translocate phosphatidylserine, but not phosphatidylcholine. Phospholipid translocation also seems to be implicated in vesicle formation and in uptake of lipid signaling molecules. Reconstituted to liposomes, the ATP8A2:TMEM30A flippase complex predominantly transports phosphatidylserine (PS) and to a lesser extent phosphatidylethanolamine (PE). Phospholipid translocation is not associated with a countertransport of an inorganic ion or other charged substrate from the cytoplasmic side toward the exoplasm in connection with the phosphorylation from ATP. ATP8A2:TMEM30A may be involved in regulation of neurite outgrowth. Proposed to function in the generation and maintenance of phospholipid asymmetry in photoreceptor disk membranes and neuronal axon membranes. May be involved in vesicle trafficking in neuronal cells. Required for normal visual and auditory function; involved in photoreceptor and inner ear spiral ganglion cell survival. The sequence is that of Phospholipid-transporting ATPase IB from Homo sapiens (Human).